The following is a 273-amino-acid chain: Cell division protein ZipA (273 aa).

Met-1 is a topological domain (periplasmic). A helical transmembrane segment spans residues 2 to 22 (DIGLREWLIVIGIIVIAGILF). The Cytoplasmic portion of the chain corresponds to 23-273 (DGWRRMRGGK…ERRQMTIKQR (251 aa)). The disordered stretch occupies residues 61-127 (VVNREHEPSL…DLQERPQKEQ (67 aa)).

Belongs to the ZipA family. In terms of assembly, interacts with FtsZ via their C-terminal domains.

The protein localises to the cell inner membrane. Its function is as follows. Essential cell division protein that stabilizes the FtsZ protofilaments by cross-linking them and that serves as a cytoplasmic membrane anchor for the Z ring. Also required for the recruitment to the septal ring of downstream cell division proteins. The chain is Cell division protein ZipA from Stutzerimonas stutzeri (strain A1501) (Pseudomonas stutzeri).